The sequence spans 307 residues: MKRAGGGVDFISSLPDEILHHILANTPTKLAIRTSVLSKRWKHVWYETPSISIVCNRVDPDSLNKTLSSYSTPKIKSFDVTISRDVTVPEIDTWINLALSRKAENVSLRFTSHYRFRDTFFINSSLKQLSLTLVYCILNPKCVVSWSSLRNLSLNRCKVSDDSIAKILTGCSLLESLTLNLCDRLNDLDLSKSLSLRRLEILGDRWTPERIVAPHIRYLRLENYQRPSTLVDVSSLTEANLGLSKHVLDYFTCEMETESLQYMVRQTVVKLQNIKKLTIGGIFLQILSLAELCGVTLPVFQNSISKL.

The F-box domain occupies valine 8–valine 54.

The polypeptide is F-box protein At5g03100 (Arabidopsis thaliana (Mouse-ear cress)).